The sequence spans 257 residues: Tryptophan synthase alpha chain (257 aa).

Active-site proton acceptor residues include glutamate 51 and aspartate 62.

Belongs to the TrpA family. In terms of assembly, tetramer of two alpha and two beta chains.

It carries out the reaction (1S,2R)-1-C-(indol-3-yl)glycerol 3-phosphate + L-serine = D-glyceraldehyde 3-phosphate + L-tryptophan + H2O. It functions in the pathway amino-acid biosynthesis; L-tryptophan biosynthesis; L-tryptophan from chorismate: step 5/5. In terms of biological role, the alpha subunit is responsible for the aldol cleavage of indoleglycerol phosphate to indole and glyceraldehyde 3-phosphate. The sequence is that of Tryptophan synthase alpha chain from Nitratidesulfovibrio vulgaris (strain DP4) (Desulfovibrio vulgaris).